A 98-amino-acid polypeptide reads, in one-letter code: Protein S100-A13 (98 aa).

Positions 18-53 (STFFTFAGREGRKGSLNINEFKELATQQLPHLLKDV) constitute an EF-hand domain. Residues Ser32, Glu37, Asp64, Asn66, Asp68, Glu70, and Glu75 each coordinate Ca(2+). Ser32 carries the post-translational modification Phosphoserine.

It belongs to the S-100 family. Homodimer. Part of a copper-dependent multiprotein complex containing S100A13, FGF1 and SYT1. Interacts with FGF1 and SYT1. Interacts with IL1A.

The protein localises to the cytoplasm. It localises to the secreted. Functionally, plays a role in the export of proteins that lack a signal peptide and are secreted by an alternative pathway. Binds two calcium ions per subunit. Binds one copper ion. Binding of one copper ion does not interfere with calcium binding. Required for the copper-dependent stress-induced export of IL1A and FGF1. The calcium-free protein binds to lipid vesicles containing phosphatidylserine, but not to vesicles containing phosphatidylcholine. This is Protein S100-A13 (S100a13) from Mus musculus (Mouse).